A 96-amino-acid chain; its full sequence is UPF0251 protein VPA0321 (96 aa).

The protein belongs to the UPF0251 family.

This chain is UPF0251 protein VPA0321, found in Vibrio parahaemolyticus serotype O3:K6 (strain RIMD 2210633).